We begin with the raw amino-acid sequence, 152 residues long: Siroheme decarboxylase beta subunit (152 aa).

This sequence belongs to the Ahb/Nir family. As to quaternary structure, forms a heterodimer composed of AhbA and AhbB.

It carries out the reaction siroheme + 2 H(+) = 12,18-didecarboxysiroheme + 2 CO2. It participates in porphyrin-containing compound metabolism; protoheme biosynthesis. Its activity is regulated as follows. Binds heme b. The redox state of the heme b modulates the activity of the enzyme. Activity is stimulated by sodium dithionite. Involved in siroheme-dependent heme b biosynthesis. Catalyzes the decarboxylation of siroheme into didecarboxysiroheme. This chain is Siroheme decarboxylase beta subunit, found in Methanosarcina barkeri (strain Fusaro / DSM 804).